The chain runs to 599 residues: Laccase-2 (599 aa).

Positions 1–19 are cleaved as a signal peptide; it reads MARSTTSLFALSLVASAFA. Plastocyanin-like domains follow at residues 21–145 and 157–307; these read VVDY…IVIY and VDDE…LVYE. 4 residues coordinate Cu cation: H82, H84, H127, and H129. C103 and C588 form a disulfide bridge. Residues N207, N208, N231, N397, and N443 are each glycosylated (N-linked (GlcNAc...) asparagine). The region spanning 450-567 is the Plastocyanin-like 3 domain; that stretch reads DVPTLLKILT…EGFAMVFAEA (118 aa). Cu cation-binding residues include H497, H500, H502, H549, C550, H551, and H555.

It belongs to the multicopper oxidase family. In terms of assembly, homodimer. It depends on Cu cation as a cofactor. As to expression, in mycelia, at a lower level than LCC4.

It is found in the secreted. It carries out the reaction 4 hydroquinone + O2 = 4 benzosemiquinone + 2 H2O. Its function is as follows. Lignin degradation and detoxification of lignin-derived products. This is Laccase-2 (LCC2) from Thanatephorus cucumeris (Black scurf of potato).